The following is a 641-amino-acid chain: Fructose-1,6-bisphosphatase class 3 (641 aa).

This sequence belongs to the FBPase class 3 family. Requires Mn(2+) as cofactor.

The enzyme catalyses beta-D-fructose 1,6-bisphosphate + H2O = beta-D-fructose 6-phosphate + phosphate. It functions in the pathway carbohydrate biosynthesis; gluconeogenesis. The sequence is that of Fructose-1,6-bisphosphatase class 3 from Bacillus velezensis (strain DSM 23117 / BGSC 10A6 / LMG 26770 / FZB42) (Bacillus amyloliquefaciens subsp. plantarum).